The chain runs to 157 residues: Small ribosomal subunit protein uS7 (157 aa).

Belongs to the universal ribosomal protein uS7 family. Part of the 30S ribosomal subunit. Contacts proteins S9 and S11.

Its function is as follows. One of the primary rRNA binding proteins, it binds directly to 16S rRNA where it nucleates assembly of the head domain of the 30S subunit. Is located at the subunit interface close to the decoding center, probably blocks exit of the E-site tRNA. The protein is Small ribosomal subunit protein uS7 of Chlamydia felis (strain Fe/C-56) (Chlamydophila felis).